A 334-amino-acid polypeptide reads, in one-letter code: D-alanine--D-alanine ligase (334 aa).

An ATP-grasp domain is found at 110–306 (KHVLKSLGID…FDHVVDLIVQ (197 aa)). Residue 138–190 (LPYPFVIKPVRGGSTIGVHAIFSKSEYLDLSAHADTLEDRMIVEEYVSGQEVQ) coordinates ATP. Mg(2+) contacts are provided by Asp258, Glu272, and Asn274.

The protein belongs to the D-alanine--D-alanine ligase family. The cofactor is Mg(2+). Mn(2+) is required as a cofactor.

Its subcellular location is the cytoplasm. The enzyme catalyses 2 D-alanine + ATP = D-alanyl-D-alanine + ADP + phosphate + H(+). Its pathway is cell wall biogenesis; peptidoglycan biosynthesis. In terms of biological role, cell wall formation. This Anaplasma marginale (strain Florida) protein is D-alanine--D-alanine ligase.